We begin with the raw amino-acid sequence, 130 residues long: Small ribosomal subunit protein uS9 (130 aa).

This sequence belongs to the universal ribosomal protein uS9 family.

The polypeptide is Small ribosomal subunit protein uS9 (Sodalis glossinidius (strain morsitans)).